Here is a 92-residue protein sequence, read N- to C-terminus: Small ribosomal subunit protein bS20 (92 aa).

The segment at M1–R24 is disordered.

It belongs to the bacterial ribosomal protein bS20 family.

Binds directly to 16S ribosomal RNA. The polypeptide is Small ribosomal subunit protein bS20 (Rhizobium etli (strain ATCC 51251 / DSM 11541 / JCM 21823 / NBRC 15573 / CFN 42)).